A 282-amino-acid polypeptide reads, in one-letter code: NADPH-dependent 7-cyano-7-deazaguanine reductase (282 aa).

Substrate is bound at residue 88–90 (IES). 90–91 (SK) is a binding site for NADPH. Catalysis depends on Cys-190, which acts as the Thioimide intermediate. Asp-197 serves as the catalytic Proton donor. 229–230 (HE) is a binding site for substrate. Residue 258–259 (RG) participates in NADPH binding.

This sequence belongs to the GTP cyclohydrolase I family. QueF type 2 subfamily. In terms of assembly, homodimer.

It localises to the cytoplasm. It carries out the reaction 7-aminomethyl-7-carbaguanine + 2 NADP(+) = 7-cyano-7-deazaguanine + 2 NADPH + 3 H(+). It functions in the pathway tRNA modification; tRNA-queuosine biosynthesis. Its function is as follows. Catalyzes the NADPH-dependent reduction of 7-cyano-7-deazaguanine (preQ0) to 7-aminomethyl-7-deazaguanine (preQ1). The protein is NADPH-dependent 7-cyano-7-deazaguanine reductase of Salmonella heidelberg (strain SL476).